Here is a 218-residue protein sequence, read N- to C-terminus: Uracil-DNA glycosylase (218 aa).

Asp59 functions as the Proton acceptor in the catalytic mechanism.

It belongs to the uracil-DNA glycosylase (UDG) superfamily. UNG family.

It localises to the cytoplasm. The catalysed reaction is Hydrolyzes single-stranded DNA or mismatched double-stranded DNA and polynucleotides, releasing free uracil.. Its function is as follows. Excises uracil residues from the DNA which can arise as a result of misincorporation of dUMP residues by DNA polymerase or due to deamination of cytosine. This is Uracil-DNA glycosylase from Staphylococcus saprophyticus subsp. saprophyticus (strain ATCC 15305 / DSM 20229 / NCIMB 8711 / NCTC 7292 / S-41).